The following is a 183-amino-acid chain: ATP synthase subunit b, chloroplastic (183 aa).

The chain crosses the membrane as a helical span at residues 25–45 (DILATNLINLTVVVGVLIFFG).

It belongs to the ATPase B chain family. As to quaternary structure, F-type ATPases have 2 components, F(1) - the catalytic core - and F(0) - the membrane proton channel. F(1) has five subunits: alpha(3), beta(3), gamma(1), delta(1), epsilon(1). F(0) has four main subunits: a(1), b(1), b'(1) and c(10-14). The alpha and beta chains form an alternating ring which encloses part of the gamma chain. F(1) is attached to F(0) by a central stalk formed by the gamma and epsilon chains, while a peripheral stalk is formed by the delta, b and b' chains.

It is found in the plastid. The protein localises to the chloroplast thylakoid membrane. F(1)F(0) ATP synthase produces ATP from ADP in the presence of a proton or sodium gradient. F-type ATPases consist of two structural domains, F(1) containing the extramembraneous catalytic core and F(0) containing the membrane proton channel, linked together by a central stalk and a peripheral stalk. During catalysis, ATP synthesis in the catalytic domain of F(1) is coupled via a rotary mechanism of the central stalk subunits to proton translocation. Its function is as follows. Component of the F(0) channel, it forms part of the peripheral stalk, linking F(1) to F(0). In Saccharum hybrid (Sugarcane), this protein is ATP synthase subunit b, chloroplastic.